The primary structure comprises 172 residues: L-2,4-diaminobutyric acid acetyltransferase (172 aa).

An N-acetyltransferase domain is found at 15-166; sequence IVFDKPTVED…DEHEEELTFR (152 aa).

Belongs to the acetyltransferase family. EctA subfamily.

It catalyses the reaction L-2,4-diaminobutanoate + acetyl-CoA = (2S)-4-acetamido-2-aminobutanoate + CoA + H(+). The protein operates within amine and polyamine biosynthesis; ectoine biosynthesis; L-ectoine from L-aspartate 4-semialdehyde: step 2/3. Its function is as follows. Catalyzes the acetylation of L-2,4-diaminobutyrate (DABA) to gamma-N-acetyl-alpha,gamma-diaminobutyric acid (ADABA) with acetyl coenzyme A. In Marinococcus halophilus, this protein is L-2,4-diaminobutyric acid acetyltransferase (ectA).